The following is a 471-amino-acid chain: Argininosuccinate lyase (471 aa).

This sequence belongs to the lyase 1 family. Argininosuccinate lyase subfamily.

It localises to the cytoplasm. It carries out the reaction 2-(N(omega)-L-arginino)succinate = fumarate + L-arginine. Its pathway is amino-acid biosynthesis; L-arginine biosynthesis; L-arginine from L-ornithine and carbamoyl phosphate: step 3/3. The chain is Argininosuccinate lyase from Ehrlichia canis (strain Jake).